The primary structure comprises 105 residues: Endogenous retrovirus group K member 6 Rec protein (105 aa).

The disordered stretch occupies residues 1 to 49 (MNPSEMQRKAPPRRRRHRNRAPLTHKMNKMVTSEEQMKLPSTKKAEPPT). The span at 10 to 20 (APPRRRRHRNR) shows a compositional bias: basic residues. Residues 13–20 (RRRRHRNR) carry the Nuclear localization signal motif. Residues 50 to 59 (WAQLKKLTQL) carry the Nuclear export signal motif.

Forms homodimers, homotrimers, and homotetramers via a C-terminal domain. Associates with XPO1 and with ZNF145. In terms of tissue distribution, expressed at higher level in placenta, expressed at lower level in several organs and cell lines.

It is found in the cytoplasm. The protein localises to the nucleus. The protein resides in the nucleolus. In terms of biological role, retroviral replication requires the nuclear export and translation of unspliced, singly-spliced and multiply-spliced derivatives of the initial genomic transcript. Rec interacts with a highly structured RNA element (RcRE) present in the viral 3'LTR and recruits the cellular nuclear export machinery. This permits export to the cytoplasm of unspliced genomic or incompletely spliced subgenomic viral transcripts. This Homo sapiens (Human) protein is Endogenous retrovirus group K member 6 Rec protein (ERVK-6).